A 216-amino-acid polypeptide reads, in one-letter code: Small ribosomal subunit protein uS3c (216 aa).

Positions 43-116 constitute a KH type-2 domain; that stretch reads IKNYVQKNMR…RLNIAITRVA (74 aa).

The protein belongs to the universal ribosomal protein uS3 family. In terms of assembly, part of the 30S ribosomal subunit.

The protein localises to the plastid. Its subcellular location is the chloroplast. The polypeptide is Small ribosomal subunit protein uS3c (rps3) (Drimys granadensis).